The primary structure comprises 498 residues: Probable malate:quinone oxidoreductase 2 (498 aa).

Belongs to the MQO family. Requires FAD as cofactor.

It carries out the reaction (S)-malate + a quinone = a quinol + oxaloacetate. It participates in carbohydrate metabolism; tricarboxylic acid cycle; oxaloacetate from (S)-malate (quinone route): step 1/1. In Staphylococcus epidermidis (strain ATCC 12228 / FDA PCI 1200), this protein is Probable malate:quinone oxidoreductase 2.